The primary structure comprises 505 residues: Probable alpha-L-arabinofuranosidase C (505 aa).

N-linked (GlcNAc...) asparagine glycans are attached at residues asparagine 152, asparagine 181, and asparagine 269.

Belongs to the glycosyl hydrolase 51 family.

Its subcellular location is the secreted. The enzyme catalyses Hydrolysis of terminal non-reducing alpha-L-arabinofuranoside residues in alpha-L-arabinosides.. It functions in the pathway glycan metabolism; L-arabinan degradation. Its function is as follows. Alpha-L-arabinofuranosidase involved in the degradation of arabinoxylan, a major component of plant hemicellulose. Acts only on small linear 1,5-alpha-linked L-arabinofuranosyl oligosaccharides. In Aspergillus niger (strain ATCC MYA-4892 / CBS 513.88 / FGSC A1513), this protein is Probable alpha-L-arabinofuranosidase C (abfC).